The sequence spans 449 residues: Kynurenine 3-monooxygenase (449 aa).

This sequence belongs to the aromatic-ring hydroxylase family. KMO subfamily. It depends on FAD as a cofactor.

It catalyses the reaction L-kynurenine + NADPH + O2 + H(+) = 3-hydroxy-L-kynurenine + NADP(+) + H2O. The protein operates within cofactor biosynthesis; NAD(+) biosynthesis; quinolinate from L-kynurenine: step 1/3. Its function is as follows. Catalyzes the hydroxylation of L-kynurenine (L-Kyn) to form 3-hydroxy-L-kynurenine (L-3OHKyn). Required for synthesis of quinolinic acid. The sequence is that of Kynurenine 3-monooxygenase from Cytophaga hutchinsonii (strain ATCC 33406 / DSM 1761 / CIP 103989 / NBRC 15051 / NCIMB 9469 / D465).